The following is a 432-amino-acid chain: Adenylosuccinate synthetase (432 aa).

Residues 12-18 and 40-42 each bind GTP; these read GDEGKGK and GHT. D13 functions as the Proton acceptor in the catalytic mechanism. Residues D13 and G40 each coordinate Mg(2+). Residues 13–16, 38–41, T132, R146, Q226, T241, and R305 contribute to the IMP site; these read DEGK and NAGH. Residue H41 is the Proton donor of the active site. 301 to 307 is a binding site for substrate; that stretch reads VVTGRKR. GTP-binding positions include R307, 333–335, and 415–417; these read KLD and STS.

The protein belongs to the adenylosuccinate synthetase family. Homodimer. It depends on Mg(2+) as a cofactor.

The protein resides in the cytoplasm. The enzyme catalyses IMP + L-aspartate + GTP = N(6)-(1,2-dicarboxyethyl)-AMP + GDP + phosphate + 2 H(+). The protein operates within purine metabolism; AMP biosynthesis via de novo pathway; AMP from IMP: step 1/2. Plays an important role in the de novo pathway of purine nucleotide biosynthesis. Catalyzes the first committed step in the biosynthesis of AMP from IMP. The protein is Adenylosuccinate synthetase of Rhizobium etli (strain CIAT 652).